The following is a 259-amino-acid chain: NADPH-dependent reductase BacG (259 aa).

NADP(+) is bound by residues 12–15, 34–36, 62–63, isoleucine 90, lysine 113, and 185–191; these read SQGI, SRN, DM, and GFIATDR.

Belongs to the short-chain dehydrogenases/reductases (SDR) family. Homodimer.

It is found in the cytoplasm. It participates in antibiotic biosynthesis; bacilysin biosynthesis. Its function is as follows. Along with the bacABCDEF operon, BacG is involved in the biosynthesis of the nonribosomally synthesized dipeptide antibiotic bacilysin, composed of L-alanine and L-anticapsin. Bacilysin is an irreversible inactivator of the glutaminase domain of glucosamine synthetase. BacG catalyzes the stereoselective reduction of exocyclic-delta(3),delta(5)-dihydro-hydroxyphenylpyruvate (ex-H2HPP), adding a pro-S hydride equivalent to C4 position to yield tetrahydro-hydroxyphenylpyruvate (H4HPP). Although the 3Z,7R-ex-H2HPP isomer is kinetically disfavored by BacB and produced in a smaller quantity than 3E,7R-ex-H2HPP, it is the preferred substrate for the conjugate reduction reaction of BacG. This chain is NADPH-dependent reductase BacG, found in Bacillus subtilis (strain 168).